The chain runs to 244 residues: Ubiquinone/menaquinone biosynthesis C-methyltransferase UbiE (244 aa).

S-adenosyl-L-methionine-binding positions include Thr70, Asp91, and 117-118; that span reads DA.

Belongs to the class I-like SAM-binding methyltransferase superfamily. MenG/UbiE family.

It catalyses the reaction a 2-demethylmenaquinol + S-adenosyl-L-methionine = a menaquinol + S-adenosyl-L-homocysteine + H(+). The enzyme catalyses a 2-methoxy-6-(all-trans-polyprenyl)benzene-1,4-diol + S-adenosyl-L-methionine = a 5-methoxy-2-methyl-3-(all-trans-polyprenyl)benzene-1,4-diol + S-adenosyl-L-homocysteine + H(+). The protein operates within quinol/quinone metabolism; menaquinone biosynthesis; menaquinol from 1,4-dihydroxy-2-naphthoate: step 2/2. It participates in cofactor biosynthesis; ubiquinone biosynthesis. In terms of biological role, methyltransferase required for the conversion of demethylmenaquinol (DMKH2) to menaquinol (MKH2) and the conversion of 2-polyprenyl-6-methoxy-1,4-benzoquinol (DDMQH2) to 2-polyprenyl-3-methyl-6-methoxy-1,4-benzoquinol (DMQH2). This chain is Ubiquinone/menaquinone biosynthesis C-methyltransferase UbiE, found in Laribacter hongkongensis (strain HLHK9).